Here is a 118-residue protein sequence, read N- to C-terminus: Non-specific lipid-transfer protein 2 (118 aa).

The signal sequence occupies residues 1-25; the sequence is MAGVMKLACMVLACMIVAGPITANA. Intrachain disulfides connect cysteine 29–cysteine 76, cysteine 39–cysteine 53, cysteine 54–cysteine 100, and cysteine 74–cysteine 114.

This sequence belongs to the plant LTP family.

Its function is as follows. Plant non-specific lipid-transfer proteins transfer phospholipids as well as galactolipids across membranes. May play a role in wax or cutin deposition in the cell walls of expanding epidermal cells and certain secretory tissues. This chain is Non-specific lipid-transfer protein 2 (LTP2), found in Arabidopsis thaliana (Mouse-ear cress).